A 209-amino-acid polypeptide reads, in one-letter code: Putative 3-methyladenine DNA glycosylase (209 aa).

The tract at residues 189 to 209 is disordered; sequence HVSTTRLGAPKKKRQKRLERR. Positions 197–209 are enriched in basic residues; it reads APKKKRQKRLERR.

Belongs to the DNA glycosylase MPG family.

The polypeptide is Putative 3-methyladenine DNA glycosylase (Chlorobaculum parvum (strain DSM 263 / NCIMB 8327) (Chlorobium vibrioforme subsp. thiosulfatophilum)).